The sequence spans 180 residues: NAD(P)H-quinone oxidoreductase subunit J (180 aa).

A compositionally biased stretch (polar residues) spans Met-1–Gly-16. The segment at Met-1–Pro-23 is disordered.

Belongs to the complex I 30 kDa subunit family. NDH-1 can be composed of about 15 different subunits; different subcomplexes with different compositions have been identified which probably have different functions.

The protein localises to the cellular thylakoid membrane. The enzyme catalyses a plastoquinone + NADH + (n+1) H(+)(in) = a plastoquinol + NAD(+) + n H(+)(out). It catalyses the reaction a plastoquinone + NADPH + (n+1) H(+)(in) = a plastoquinol + NADP(+) + n H(+)(out). Its function is as follows. NDH-1 shuttles electrons from an unknown electron donor, via FMN and iron-sulfur (Fe-S) centers, to quinones in the respiratory and/or the photosynthetic chain. The immediate electron acceptor for the enzyme in this species is believed to be plastoquinone. Couples the redox reaction to proton translocation, and thus conserves the redox energy in a proton gradient. Cyanobacterial NDH-1 also plays a role in inorganic carbon-concentration. The chain is NAD(P)H-quinone oxidoreductase subunit J from Prochlorococcus marinus (strain MIT 9211).